A 316-amino-acid polypeptide reads, in one-letter code: Fe-S cluster assembly protein DRE2 (316 aa).

The segment at 7 to 139 (VSPPKRTLLL…PDYGDNEGAV (133 aa)) is N-terminal SAM-like domain. The segment at 140-208 (TLKFGLKKKN…EDTLMTEEDL (69 aa)) is linker. 4 residues coordinate [2Fe-2S] cluster: cysteine 218, cysteine 229, cysteine 232, and cysteine 234. The interval 218–234 (CQPKAGKRRRACKDCSC) is fe-S binding site A. 4 residues coordinate [4Fe-4S] cluster: cysteine 279, cysteine 282, cysteine 290, and cysteine 293. 2 short sequence motifs (cx2C motif) span residues 279-282 (CGNC) and 290-293 (CDGC). Positions 279-293 (CGNCSLGDAFRCDGC) are fe-S binding site B.

It belongs to the anamorsin family. In terms of assembly, monomer. Interacts with TAH18. Interacts with MIA40. The cofactor is [2Fe-2S] cluster. [4Fe-4S] cluster is required as a cofactor.

The protein localises to the cytoplasm. Its subcellular location is the mitochondrion intermembrane space. In terms of biological role, component of the cytosolic iron-sulfur (Fe-S) protein assembly (CIA) machinery required for the maturation of extramitochondrial Fe-S proteins. Part of an electron transfer chain functioning in an early step of cytosolic Fe-S biogenesis, facilitating the de novo assembly of a [4Fe-4S] cluster on the scaffold complex CFD1-NBP35. Electrons are transferred to DRE2 from NADPH via the FAD- and FMN-containing protein TAH18. TAH18-DRE2 are also required for the assembly of the diferric tyrosyl radical cofactor of ribonucleotide reductase (RNR), probably by providing electrons for reduction during radical cofactor maturation in the catalytic small subunit RNR2. In Fusarium vanettenii (strain ATCC MYA-4622 / CBS 123669 / FGSC 9596 / NRRL 45880 / 77-13-4) (Fusarium solani subsp. pisi), this protein is Fe-S cluster assembly protein DRE2.